A 287-amino-acid polypeptide reads, in one-letter code: Large ribosomal subunit protein uL2 (287 aa).

The disordered stretch occupies residues 221 to 287; the sequence is RGSVMNPCDH…SKRSRGGRDS (67 aa). Positions 258 to 287 are enriched in basic residues; it reads KTRKKNKPSNKLVVRRRRRISKRSRGGRDS.

It belongs to the universal ribosomal protein uL2 family. In terms of assembly, part of the 50S ribosomal subunit. Forms a bridge to the 30S subunit in the 70S ribosome.

In terms of biological role, one of the primary rRNA binding proteins. Required for association of the 30S and 50S subunits to form the 70S ribosome, for tRNA binding and peptide bond formation. It has been suggested to have peptidyltransferase activity; this is somewhat controversial. Makes several contacts with the 16S rRNA in the 70S ribosome. The polypeptide is Large ribosomal subunit protein uL2 (Prochlorococcus marinus (strain MIT 9301)).